The following is a 218-amino-acid chain: uncharacterized protein (218 aa).

The signal sequence occupies residues 1–17 (MLKKIIILFLGIFLLSS). C18 is lipidated: N-palmitoyl cysteine. C18 is lipidated: S-diacylglycerol cysteine. Residues 136–164 (YKEKKIEEELNQIKAMLKETKRDITKYTC) adopt a coiled-coil conformation.

It localises to the cell membrane. This is an uncharacterized protein from Rickettsia typhi (strain ATCC VR-144 / Wilmington).